A 175-amino-acid polypeptide reads, in one-letter code: MNESENSPQHNEVTVPMVEDTSSNADIPMEQIQREDNKNYDKHDNECFDMNGNHNNNSDNLQFDSVPSSATKDLKNIKSVTNQNVKIEESSSTNSVIEESSEPKISKLENVNLAATVGGSQTRKYLNTNVTPHLLAGMRLIAVQQPEDPLRVLGEYLIEQSNILKSGEKESNASK.

Residues 1 to 12 show a composition bias toward polar residues; it reads MNESENSPQHNE. The tract at residues 1-45 is disordered; the sequence is MNESENSPQHNEVTVPMVEDTSSNADIPMEQIQREDNKNYDKHDN. Over residues 32 to 45 the composition is skewed to basic and acidic residues; it reads IQREDNKNYDKHDN. Positions 121-162 are DPY-30; sequence QTRKYLNTNVTPHLLAGMRLIAVQQPEDPLRVLGEYLIEQSN.

This sequence belongs to the dpy-30 family. As to quaternary structure, component of the Set1C/COMPASS complex which consists of SET1(2), BRE2(2), SPP1(2), SDC1(1), SHG1(1), SWD1(1), SWD2(1), and SWD3(1). Interacts directly with BRE2.

The protein localises to the nucleus. In terms of biological role, component of the Set1C/COMPASS complex that specifically mono-, di- and trimethylates histone H3 to form H3K4me1/2/3, which subsequently plays a role in telomere length maintenance and transcription elongation regulation. COMPASS recognizes ubiquitinated H2B on one face of the nucleosome which stimulates the methylation of H3 on the opposing face. The sequence is that of COMPASS component SDC1 from Saccharomyces cerevisiae (strain ATCC 204508 / S288c) (Baker's yeast).